We begin with the raw amino-acid sequence, 63 residues long: Arabinogalactan protein 41 (63 aa).

The first 27 residues, 1 to 27 (MSGSRLFFGVSTIVSIIFAILLPMAHA), serve as a signal peptide directing secretion. Q28 is modified (pyrrolidone carboxylic acid). 3 positions are modified to 4-hydroxyproline: P32, P34, and P36. Residues P32, P34, and P36 are each glycosylated (O-linked (Ara...) hydroxyproline). S38 carries the GPI-anchor amidated serine lipid modification. Positions 39 to 63 (DGTTIDQGIAYVLMLVALVLTYLIH) are cleaved as a propeptide — removed in mature form.

The protein belongs to the AG-peptide AGP family. Contains 4-hydroxyproline; hydroxylated on Pro-32, Pro-34 and Pro-36. Post-translationally, O-glycosylated on hydroxyprolines; noncontiguous hydroxylproline residues are glycosylated with arabinogalactan.

The protein resides in the cell membrane. In terms of biological role, proteoglycan that seems to be implicated in diverse developmental roles such as differentiation, cell-cell recognition, embryogenesis and programmed cell death. This chain is Arabinogalactan protein 41, found in Arabidopsis thaliana (Mouse-ear cress).